The sequence spans 815 residues: Probable bifunctional folylpolyglutamate synthase/dihydropteroate synthase (815 aa).

The segment at 1–416 (MRYDEAANFL…LVAGSLFAVA (416 aa)) is folylpolyglutamate synthase. 47–53 (GSNGKGS) serves as a coordination point for ATP. Positions 553–803 (TAVMGILNVT…DVPENVAAVR (251 aa)) constitute a Pterin-binding domain. A DHPS region spans residues 555-815 (VMGILNVTPD…EATRTGADAE (261 aa)). N560 lines the Mg(2+) pocket. Residues T600, D633, N652, D722, K758, and 791–793 (RVH) each bind (7,8-dihydropterin-6-yl)methyl diphosphate.

The protein in the N-terminal section; belongs to the folylpolyglutamate synthase family. This sequence in the C-terminal section; belongs to the DHPS family. Requires Mg(2+) as cofactor.

The catalysed reaction is (6S)-5,6,7,8-tetrahydrofolyl-(gamma-L-Glu)(n) + L-glutamate + ATP = (6S)-5,6,7,8-tetrahydrofolyl-(gamma-L-Glu)(n+1) + ADP + phosphate + H(+). The enzyme catalyses (7,8-dihydropterin-6-yl)methyl diphosphate + 4-aminobenzoate = 7,8-dihydropteroate + diphosphate. It functions in the pathway cofactor biosynthesis; tetrahydrofolylpolyglutamate biosynthesis. It participates in cofactor biosynthesis; tetrahydrofolate biosynthesis; 7,8-dihydrofolate from 2-amino-4-hydroxy-6-hydroxymethyl-7,8-dihydropteridine diphosphate and 4-aminobenzoate: step 1/2. Can complement an H.volcanii mutant strain that is thymidine auxotroph because it lacks the two dihydrofolate reductase genes encoded by hdrA and hdrB. The sequence is that of Probable bifunctional folylpolyglutamate synthase/dihydropteroate synthase (folP) from Halobacterium salinarum (strain ATCC 700922 / JCM 11081 / NRC-1) (Halobacterium halobium).